Here is a 449-residue protein sequence, read N- to C-terminus: UDP-N-acetylmuramoylalanine--D-glutamate ligase (449 aa).

An ATP-binding site is contributed by 118 to 124 (GTNGKTT).

This sequence belongs to the MurCDEF family.

It is found in the cytoplasm. It catalyses the reaction UDP-N-acetyl-alpha-D-muramoyl-L-alanine + D-glutamate + ATP = UDP-N-acetyl-alpha-D-muramoyl-L-alanyl-D-glutamate + ADP + phosphate + H(+). It functions in the pathway cell wall biogenesis; peptidoglycan biosynthesis. In terms of biological role, cell wall formation. Catalyzes the addition of glutamate to the nucleotide precursor UDP-N-acetylmuramoyl-L-alanine (UMA). In Staphylococcus saprophyticus subsp. saprophyticus (strain ATCC 15305 / DSM 20229 / NCIMB 8711 / NCTC 7292 / S-41), this protein is UDP-N-acetylmuramoylalanine--D-glutamate ligase.